Consider the following 103-residue polypeptide: Auxin-responsive protein SAUR50 (103 aa).

The protein belongs to the ARG7 family.

Functionally, effector of hormonal and environmental signals in plant growth. Involved in heliotropism. This Helianthus annuus (Common sunflower) protein is Auxin-responsive protein SAUR50.